The primary structure comprises 160 residues: Succinate dehydrogenase assembly factor 2-B, mitochondrial (160 aa).

A mitochondrion-targeting transit peptide spans 1–23 (MLRQLKLTLNISRWIFMPWQRHA).

This sequence belongs to the SDHAF2 family. As to quaternary structure, interacts with the flavoprotein subunit within the SDH catalytic dimer.

The protein localises to the mitochondrion matrix. In terms of biological role, plays an essential role in the assembly of succinate dehydrogenase (SDH), an enzyme complex (also referred to as respiratory complex II) that is a component of both the tricarboxylic acid (TCA) cycle and the mitochondrial electron transport chain, and which couples the oxidation of succinate to fumarate with the reduction of ubiquinone (coenzyme Q) to ubiquinol. Required for flavinylation (covalent attachment of FAD) of the flavoprotein subunit of the SDH catalytic dimer. The polypeptide is Succinate dehydrogenase assembly factor 2-B, mitochondrial (Drosophila pseudoobscura pseudoobscura (Fruit fly)).